A 191-amino-acid polypeptide reads, in one-letter code: uncharacterized protein (191 aa).

This is an uncharacterized protein from Treponema pallidum (strain Nichols).